Here is a 327-residue protein sequence, read N- to C-terminus: 2-methoxy-6-polyprenyl-1,4-benzoquinol methylase, mitochondrial (327 aa).

The N-terminal 43 residues, 1–43 (MAAPIRAFVLRVLSDSTRNIHHVLRCRSKYLCRRAAITARRGY), are a transit peptide targeting the mitochondrion. S-adenosyl-L-methionine-binding positions include Thr-117, Asp-171, and 199 to 200 (DA).

Belongs to the class I-like SAM-binding methyltransferase superfamily. MenG/UbiE family. In terms of assembly, component of a multi-subunit COQ enzyme complex, composed of at least coq3, coq4, coq5, coq6, coq7 and coq9.

It is found in the mitochondrion inner membrane. The enzyme catalyses a 2-methoxy-6-(all-trans-polyprenyl)benzene-1,4-diol + S-adenosyl-L-methionine = a 5-methoxy-2-methyl-3-(all-trans-polyprenyl)benzene-1,4-diol + S-adenosyl-L-homocysteine + H(+). The protein operates within cofactor biosynthesis; ubiquinone biosynthesis. Methyltransferase required for the conversion of 2-polyprenyl-6-methoxy-1,4-benzoquinol (DDMQH2) to 2-polyprenyl-3-methyl-6-methoxy-1,4-benzoquinol (DMQH2). The chain is 2-methoxy-6-polyprenyl-1,4-benzoquinol methylase, mitochondrial from Danio rerio (Zebrafish).